A 105-amino-acid polypeptide reads, in one-letter code: uncharacterized protein (105 aa).

It belongs to the asfivirus C122R family.

The protein localises to the virion. This is an uncharacterized protein from African swine fever virus (strain Badajoz 1971 Vero-adapted) (Ba71V).